Reading from the N-terminus, the 285-residue chain is V-set and transmembrane domain-containing protein 2B (285 aa).

The first 28 residues, 1 to 28 (MEQRNRLGALGYLPPLLLHALLLFVADA), serve as a signal peptide directing secretion. The 115-residue stretch at 29–143 (AFTEVPKDVT…DDDTQEHKAQ (115 aa)) folds into the Ig-like V-type domain. Over 29-263 (AFTEVPKDVT…HGSGTGRSYT (235 aa)) the chain is Extracellular. Cysteines 49 and 127 form a disulfide. Residues 161–226 (EAVSHIQSSG…EAAAASAAHT (66 aa)) form a disordered region. Composition is skewed to low complexity over residues 177-189 (ASAA…GAAS) and 208-226 (PAAI…AAHT). A helical membrane pass occupies residues 264 to 284 (TDPLLSLLLLALHKFLRLLLG). Histidine 285 is a topological domain (cytoplasmic).

The protein resides in the membrane. The sequence is that of V-set and transmembrane domain-containing protein 2B (VSTM2B) from Homo sapiens (Human).